Reading from the N-terminus, the 311-residue chain is Methionyl-tRNA formyltransferase (311 aa).

Residue serine 109–proline 112 participates in (6S)-5,6,7,8-tetrahydrofolate binding.

The protein belongs to the Fmt family.

It catalyses the reaction L-methionyl-tRNA(fMet) + (6R)-10-formyltetrahydrofolate = N-formyl-L-methionyl-tRNA(fMet) + (6S)-5,6,7,8-tetrahydrofolate + H(+). Attaches a formyl group to the free amino group of methionyl-tRNA(fMet). The formyl group appears to play a dual role in the initiator identity of N-formylmethionyl-tRNA by promoting its recognition by IF2 and preventing the misappropriation of this tRNA by the elongation apparatus. This chain is Methionyl-tRNA formyltransferase, found in Kosmotoga olearia (strain ATCC BAA-1733 / DSM 21960 / TBF 19.5.1).